Here is a 374-residue protein sequence, read N- to C-terminus: UDP-N-acetylglucosamine--N-acetylmuramyl-(pentapeptide) pyrophosphoryl-undecaprenol N-acetylglucosamine transferase (374 aa).

UDP-N-acetyl-alpha-D-glucosamine-binding positions include 13 to 15, asparagine 124, arginine 165, serine 193, and glutamine 294; that span reads TGG.

Belongs to the glycosyltransferase 28 family. MurG subfamily.

Its subcellular location is the cell inner membrane. It carries out the reaction di-trans,octa-cis-undecaprenyl diphospho-N-acetyl-alpha-D-muramoyl-L-alanyl-D-glutamyl-meso-2,6-diaminopimeloyl-D-alanyl-D-alanine + UDP-N-acetyl-alpha-D-glucosamine = di-trans,octa-cis-undecaprenyl diphospho-[N-acetyl-alpha-D-glucosaminyl-(1-&gt;4)]-N-acetyl-alpha-D-muramoyl-L-alanyl-D-glutamyl-meso-2,6-diaminopimeloyl-D-alanyl-D-alanine + UDP + H(+). It participates in cell wall biogenesis; peptidoglycan biosynthesis. Functionally, cell wall formation. Catalyzes the transfer of a GlcNAc subunit on undecaprenyl-pyrophosphoryl-MurNAc-pentapeptide (lipid intermediate I) to form undecaprenyl-pyrophosphoryl-MurNAc-(pentapeptide)GlcNAc (lipid intermediate II). In Rhizobium etli (strain ATCC 51251 / DSM 11541 / JCM 21823 / NBRC 15573 / CFN 42), this protein is UDP-N-acetylglucosamine--N-acetylmuramyl-(pentapeptide) pyrophosphoryl-undecaprenol N-acetylglucosamine transferase.